The primary structure comprises 186 residues: Guanylate kinase (186 aa).

One can recognise a Guanylate kinase-like domain in the interval 4-182 (GKLIVLTGPS…TLQNLDKILF (179 aa)). 11 to 18 (GPSGVGKG) contacts ATP.

It belongs to the guanylate kinase family.

Its subcellular location is the cytoplasm. It carries out the reaction GMP + ATP = GDP + ADP. Functionally, essential for recycling GMP and indirectly, cGMP. This chain is Guanylate kinase, found in Trichodesmium erythraeum (strain IMS101).